The sequence spans 457 residues: Acetate--CoA ligase [ADP-forming] II subunit alpha (457 aa).

Belongs to the acetate CoA ligase alpha subunit family. In terms of assembly, heterotetramer of two alpha and two beta subunits.

The catalysed reaction is acetate + ATP + CoA = acetyl-CoA + ADP + phosphate. In terms of biological role, catalyzes the reversible formation of acetate and ATP from acetyl-CoA by using ADP and phosphate. Can use other substrates such as phenylacetyl-CoA, indoleacetyl-CoA and isobutyryl-CoA, but not succinyl-CoA. Seems to be involved primarily in the degradation of aryl-CoA esters to the corresponding acids. Participates in the conversion of acetyl-CoA to acetate and in the degradation of branched-chain amino acids via branched-chain-acyl-CoA esters. This is Acetate--CoA ligase [ADP-forming] II subunit alpha from Pyrococcus furiosus (strain ATCC 43587 / DSM 3638 / JCM 8422 / Vc1).